The sequence spans 544 residues: NXPE family member 4 (544 aa).

The signal sequence occupies residues 1–27 (MKISMINYKSLLALLFILASWIIFTVF). N-linked (GlcNAc...) asparagine glycans are attached at residues Asn29, Asn38, Asn47, Asn48, Asn92, Asn160, and Asn210.

The protein belongs to the NXPE family.

Its subcellular location is the secreted. The polypeptide is NXPE family member 4 (NXPE4) (Homo sapiens (Human)).